The following is a 171-amino-acid chain: Large ribosomal subunit protein uL10 (171 aa).

This sequence belongs to the universal ribosomal protein uL10 family. As to quaternary structure, part of the ribosomal stalk of the 50S ribosomal subunit. The N-terminus interacts with L11 and the large rRNA to form the base of the stalk. The C-terminus forms an elongated spine to which L12 dimers bind in a sequential fashion forming a multimeric L10(L12)X complex.

Forms part of the ribosomal stalk, playing a central role in the interaction of the ribosome with GTP-bound translation factors. The sequence is that of Large ribosomal subunit protein uL10 from Sphingopyxis alaskensis (strain DSM 13593 / LMG 18877 / RB2256) (Sphingomonas alaskensis).